Consider the following 189-residue polypeptide: Thioredoxin-like protein CITRX, chloroplastic (189 aa).

The N-terminal 56 residues, 1–56 (MAMAAAASLLPASAAPTLPGRAFRPPRNSTPTASLSCDGGSRCRGVGLGVILGGCR), are a transit peptide targeting the chloroplast. In terms of domain architecture, Thioredoxin spans 72 to 189 (GSGKYIAPDY…MIRNIIDNEL (118 aa)). Active-site nucleophile residues include cysteine 112 and cysteine 115. Cysteine 112 and cysteine 115 are oxidised to a cystine.

This sequence belongs to the thioredoxin family. Plant CITRX-type subfamily.

The protein localises to the plastid. Its subcellular location is the chloroplast. Functionally, probable thiol-disulfide oxidoreductase that may play a role in proper chloroplast development. The chain is Thioredoxin-like protein CITRX, chloroplastic from Oryza sativa subsp. japonica (Rice).